A 233-amino-acid chain; its full sequence is Small ribosomal subunit protein uS3 (233 aa).

The region spanning 39 to 108 is the KH type-2 domain; it reads IRTALFKLLK…KLIVNVRVIE (70 aa).

It belongs to the universal ribosomal protein uS3 family. Part of the 30S ribosomal subunit. Forms a tight complex with proteins S10 and S14.

Binds the lower part of the 30S subunit head. Binds mRNA in the 70S ribosome, positioning it for translation. The polypeptide is Small ribosomal subunit protein uS3 (Mycoplasma mycoides subsp. mycoides SC (strain CCUG 32753 / NCTC 10114 / PG1)).